We begin with the raw amino-acid sequence, 485 residues long: MTTVDNRQDFKVADLSLAAFGRKEITLAEHEMPGLMAIRKEYAEAQPLAGARVTGSLHMTVQTAVLIETLVALGAEVRWASCNIFSTQDHAAAAIAVGPNGTPDNPQGVPVFAWKGETLEEYWWCTEQALTWPNTPTGGPNMILDDGGDATLLVHKGVEYEKDGKVPSVDTAESDEHRVILELLTRTVGESPQKWTQLASEIRGVTEETTTGVHRLYEMHRDGTLLFPAINVNDAVTKSKFDNKYGCRHSLIDGINRATDVLIGGKTAVVCGYGDVGKGCAESLRGQGARVIITEIDPICALQAAMDGFQVTTLDEVVDKADIFVTTTGNKDIIMAKDMAKMKHQAIVGNIGHFDNEIDMAGLAQTPGIVKDEVKPQVHTWTYPDGKVLIVLSEGRLLNLGNATGHPSFVMSNSFADQTLAQIELFTKPDEYPTDVYVLPKHLDEKVARLHLDSLGVKLTTLRPEQADYIGVKVEGPYKADHYRY.

The substrate site is built by threonine 60, aspartate 146, and glutamate 208. An NAD(+)-binding site is contributed by 209–211 (TTT). Substrate is bound by residues lysine 238 and aspartate 242. NAD(+) is bound by residues asparagine 243, 272–277 (GYGDVG), glutamate 295, asparagine 330, 351–353 (IGH), and asparagine 399.

It belongs to the adenosylhomocysteinase family. Requires NAD(+) as cofactor.

It is found in the cytoplasm. It carries out the reaction S-adenosyl-L-homocysteine + H2O = L-homocysteine + adenosine. The protein operates within amino-acid biosynthesis; L-homocysteine biosynthesis; L-homocysteine from S-adenosyl-L-homocysteine: step 1/1. In terms of biological role, may play a key role in the regulation of the intracellular concentration of adenosylhomocysteine. This Streptomyces coelicolor (strain ATCC BAA-471 / A3(2) / M145) protein is Adenosylhomocysteinase.